The chain runs to 294 residues: Cytidine deaminase (294 aa).

CMP/dCMP-type deaminase domains follow at residues 48–168 (DEDA…FGPK) and 186–294 (LTGD…VLLG). 89-91 (NME) is a substrate binding site. His102 is a Zn(2+) binding site. Glu104 functions as the Proton donor in the catalytic mechanism. Zn(2+) is bound by residues Cys129 and Cys132.

Belongs to the cytidine and deoxycytidylate deaminase family. Homodimer. It depends on Zn(2+) as a cofactor.

The enzyme catalyses cytidine + H2O + H(+) = uridine + NH4(+). It carries out the reaction 2'-deoxycytidine + H2O + H(+) = 2'-deoxyuridine + NH4(+). In terms of biological role, this enzyme scavenges exogenous and endogenous cytidine and 2'-deoxycytidine for UMP synthesis. The polypeptide is Cytidine deaminase (Escherichia fergusonii (strain ATCC 35469 / DSM 13698 / CCUG 18766 / IAM 14443 / JCM 21226 / LMG 7866 / NBRC 102419 / NCTC 12128 / CDC 0568-73)).